The following is an 89-amino-acid chain: Small ribosomal subunit protein uS15 (89 aa).

Belongs to the universal ribosomal protein uS15 family. As to quaternary structure, part of the 30S ribosomal subunit. Forms a bridge to the 50S subunit in the 70S ribosome, contacting the 23S rRNA.

Functionally, one of the primary rRNA binding proteins, it binds directly to 16S rRNA where it helps nucleate assembly of the platform of the 30S subunit by binding and bridging several RNA helices of the 16S rRNA. Forms an intersubunit bridge (bridge B4) with the 23S rRNA of the 50S subunit in the ribosome. The polypeptide is Small ribosomal subunit protein uS15 (Herminiimonas arsenicoxydans).